The sequence spans 292 residues: uncharacterized protein (292 aa).

The next 5 helical transmembrane spans lie at 57-77 (IISLVIFLVGSVLSKHILTLI), 101-121 (VYVFIPIFAGIIAIPVMFNFM), 143-163 (LIYAITFTLRVATCVSFAVLI), 184-204 (VVITITNLAYRYIFLLLNFVL), and 271-291 (IAFLLFSIIITALLVLFDRGI).

Belongs to the CbiQ family.

The protein resides in the cell membrane. This is an uncharacterized protein from Methanocaldococcus jannaschii (strain ATCC 43067 / DSM 2661 / JAL-1 / JCM 10045 / NBRC 100440) (Methanococcus jannaschii).